The sequence spans 533 residues: Flavin-containing monooxygenase 5 (533 aa).

Residue Arg-5 is modified to Dimethylated arginine. Residues 10 to 14, Glu-33, and 41 to 42 each bind FAD; these read GSGAS and LW. Ser-54 is modified (phosphoserine). Position 56 is a phosphotyrosine (Tyr-56). Ser-58 bears the Phosphoserine mark. 62–63 is an FAD binding site; the sequence is NT. 196–199 contacts NADP(+); that stretch reads SGGD. Residue Thr-284 is modified to Phosphothreonine. Phosphoserine is present on Ser-401. A helical membrane pass occupies residues 513 to 533; sequence LVTVRVLMLAVTFLAVILAYF.

It belongs to the FMO family. FAD is required as a cofactor.

The protein resides in the microsome membrane. The protein localises to the endoplasmic reticulum membrane. The enzyme catalyses N,N-dimethylaniline + NADPH + O2 + H(+) = N,N-dimethylaniline N-oxide + NADP(+) + H2O. It carries out the reaction NADPH + O2 + H(+) = H2O2 + NADP(+). It catalyses the reaction heptan-2-one + NADPH + O2 + H(+) = pentyl acetate + NADP(+) + H2O. The catalysed reaction is octan-3-one + NADPH + O2 + H(+) = pentyl propanoate + NADP(+) + H2O. The enzyme catalyses octan-3-one + NADPH + O2 + H(+) = ethyl hexanoate + NADP(+) + H2O. It carries out the reaction hexan-3-one + NADPH + O2 + H(+) = ethyl butanoate + NADP(+) + H2O. It catalyses the reaction hexan-3-one + NADPH + O2 + H(+) = propyl propanoate + NADP(+) + H2O. The catalysed reaction is heptan-4-one + NADPH + O2 + H(+) = propyl butanoate + NADP(+) + H2O. The enzyme catalyses (2E)-geranial + NADPH + O2 + H(+) = (1E)-2,6-dimethylhepta-1,5-dien-1-yl formate + NADP(+) + H2O. It carries out the reaction sulcatone + NADPH + O2 + H(+) = 4-methylpent-3-en-1-yl acetate + NADP(+) + H2O. Acts as a Baeyer-Villiger monooxygenase on a broad range of substrates. Catalyzes the insertion of an oxygen atom into a carbon-carbon bond adjacent to a carbonyl, which converts ketones to esters. Active on diverse carbonyl compounds, whereas soft nucleophiles are mostly non- or poorly reactive. In contrast with other forms of FMO it is non- or poorly active on 'classical' substrates such as drugs, pesticides, and dietary components containing soft nucleophilic heteroatoms. Able to oxidize drug molecules bearing a carbonyl group on an aliphatic chain, such as nabumetone and pentoxifylline. Also, in the absence of substrates, shows slow but yet significant NADPH oxidase activity. Acts as a positive modulator of cholesterol biosynthesis as well as glucose homeostasis, promoting metabolic aging via pleiotropic effects. The polypeptide is Flavin-containing monooxygenase 5 (Rattus norvegicus (Rat)).